The sequence spans 386 residues: L-arabinitol 4-dehydrogenase (386 aa).

Zn(2+) is bound by residues Cys55, His80, Glu81, Cys110, Cys113, Cys116, Cys124, and Glu165. Residues 192-193 (PI), Asp213, Arg218, Ile293, and 317-319 (QYR) each bind NAD(+).

Belongs to the zinc-containing alcohol dehydrogenase family. As to quaternary structure, homotetramer. Zn(2+) serves as cofactor.

It catalyses the reaction L-arabinitol + NAD(+) = L-xylulose + NADH + H(+). It functions in the pathway carbohydrate degradation; L-arabinose degradation via L-arabinitol; D-xylulose 5-phosphate from L-arabinose (fungal route): step 2/5. In terms of biological role, catalyzes the NAD-dependent oxidation of L-arabinitol to L-xylulose in the fungal L-arabinose catabolic pathway. L-arabinose catabolism is important for using plant material as a carbon source. Not active with NADP as cosubstrate. The chain is L-arabinitol 4-dehydrogenase (ladA) from Aspergillus niger (strain ATCC MYA-4892 / CBS 513.88 / FGSC A1513).